Consider the following 65-residue polypeptide: Small ribosomal subunit protein bS21 (65 aa).

This sequence belongs to the bacterial ribosomal protein bS21 family.

The chain is Small ribosomal subunit protein bS21 from Thermodesulfovibrio yellowstonii (strain ATCC 51303 / DSM 11347 / YP87).